The sequence spans 22 residues: Oxygen-evolving enhancer protein 2 (22 aa).

Belongs to the PsbP family.

The protein localises to the plastid. The protein resides in the chloroplast thylakoid membrane. Its function is as follows. May be involved in the regulation of photosystem II. In Physcomitrium patens (Spreading-leaved earth moss), this protein is Oxygen-evolving enhancer protein 2.